The chain runs to 130 residues: Small ribosomal subunit protein uS8 (130 aa).

It belongs to the universal ribosomal protein uS8 family. Part of the 30S ribosomal subunit. Contacts proteins S5 and S12.

Its function is as follows. One of the primary rRNA binding proteins, it binds directly to 16S rRNA central domain where it helps coordinate assembly of the platform of the 30S subunit. This chain is Small ribosomal subunit protein uS8, found in Actinobacillus succinogenes (strain ATCC 55618 / DSM 22257 / CCUG 43843 / 130Z).